Here is a 296-residue protein sequence, read N- to C-terminus: Immediate early response gene 5-like protein (296 aa).

Belongs to the IER family.

The protein is Immediate early response gene 5-like protein (ier5l) of Xenopus tropicalis (Western clawed frog).